A 454-amino-acid polypeptide reads, in one-letter code: Argininosuccinate lyase (454 aa).

Belongs to the lyase 1 family. Argininosuccinate lyase subfamily.

The protein localises to the cytoplasm. The catalysed reaction is 2-(N(omega)-L-arginino)succinate = fumarate + L-arginine. It participates in amino-acid biosynthesis; L-arginine biosynthesis; L-arginine from L-ornithine and carbamoyl phosphate: step 3/3. This chain is Argininosuccinate lyase, found in Herpetosiphon aurantiacus (strain ATCC 23779 / DSM 785 / 114-95).